Here is a 310-residue protein sequence, read N- to C-terminus: Ribosomal RNA small subunit methyltransferase H (310 aa).

S-adenosyl-L-methionine contacts are provided by residues 33–35, D52, F79, D98, and Q105; that span reads GGH.

Belongs to the methyltransferase superfamily. RsmH family.

It localises to the cytoplasm. It catalyses the reaction cytidine(1402) in 16S rRNA + S-adenosyl-L-methionine = N(4)-methylcytidine(1402) in 16S rRNA + S-adenosyl-L-homocysteine + H(+). Specifically methylates the N4 position of cytidine in position 1402 (C1402) of 16S rRNA. This Campylobacter jejuni subsp. jejuni serotype O:6 (strain 81116 / NCTC 11828) protein is Ribosomal RNA small subunit methyltransferase H.